Consider the following 655-residue polypeptide: Protein npp-24 (655 aa).

Residues I263 to P283 form a helical membrane-spanning segment.

The protein localises to the membrane. The protein is Protein npp-24 of Caenorhabditis elegans.